The following is a 500-amino-acid chain: Serine carboxypeptidase 3 (500 aa).

A signal peptide spans 1-21 (MATTPRLASLLLLLALCAAAA). Residues 22-73 (GALRLPPDASFPGAQAERLIRALNLLPGRPRRGLGAGAEDVAPGQLLERRVT) constitute a propeptide that is removed on maturation. Cystine bridges form between C126–C366, C294–C309, and C332–C337. The N-linked (GlcNAc...) asparagine glycan is linked to N144. The active site involves S216. The active site involves D404. A substrate-binding site is contributed by C407. H461 is an active-site residue. The propeptide occupies 485 to 500 (ESVPEEEPATTFYAAI).

Belongs to the peptidase S10 family. As to quaternary structure, monomer.

It carries out the reaction Release of a C-terminal amino acid with broad specificity.. The chain is Serine carboxypeptidase 3 (CBP3) from Triticum aestivum (Wheat).